A 339-amino-acid polypeptide reads, in one-letter code: Ketol-acid reductoisomerase (NADP(+)) (339 aa).

A KARI N-terminal Rossmann domain is found at 1-182 (MRVYYDRDAD…GGGRSGVIET (182 aa)). NADP(+) contacts are provided by residues 24-27 (YGSQ), Arg48, Ser51, Thr53, and 83-86 (DELQ). His108 is a catalytic residue. Gly134 contacts NADP(+). The region spanning 183-328 (TFKEECETDL…GKLRAMMPWI (146 aa)) is the KARI C-terminal knotted domain. The Mg(2+) site is built by Asp191, Glu195, Glu227, and Glu231. Ser252 provides a ligand contact to substrate.

It belongs to the ketol-acid reductoisomerase family. The cofactor is Mg(2+).

It catalyses the reaction (2R)-2,3-dihydroxy-3-methylbutanoate + NADP(+) = (2S)-2-acetolactate + NADPH + H(+). It carries out the reaction (2R,3R)-2,3-dihydroxy-3-methylpentanoate + NADP(+) = (S)-2-ethyl-2-hydroxy-3-oxobutanoate + NADPH + H(+). Its pathway is amino-acid biosynthesis; L-isoleucine biosynthesis; L-isoleucine from 2-oxobutanoate: step 2/4. The protein operates within amino-acid biosynthesis; L-valine biosynthesis; L-valine from pyruvate: step 2/4. Its function is as follows. Involved in the biosynthesis of branched-chain amino acids (BCAA). Catalyzes an alkyl-migration followed by a ketol-acid reduction of (S)-2-acetolactate (S2AL) to yield (R)-2,3-dihydroxy-isovalerate. In the isomerase reaction, S2AL is rearranged via a Mg-dependent methyl migration to produce 3-hydroxy-3-methyl-2-ketobutyrate (HMKB). In the reductase reaction, this 2-ketoacid undergoes a metal-dependent reduction by NADPH to yield (R)-2,3-dihydroxy-isovalerate. The protein is Ketol-acid reductoisomerase (NADP(+)) of Brucella canis (strain ATCC 23365 / NCTC 10854 / RM-666).